The primary structure comprises 330 residues: uncharacterized protein (330 aa).

One can recognise a JmjC domain in the interval 96–256 (AALEFDFTDL…LMLAALRKKL (161 aa)). 3 residues coordinate Fe cation: histidine 145, aspartate 147, and histidine 224.

Belongs to the ROX family. Fe(2+) serves as cofactor.

This is an uncharacterized protein from Bacillus subtilis (strain 168).